The sequence spans 255 residues: Sec-independent protein translocase protein TatC (255 aa).

7 consecutive transmembrane segments (helical) span residues 28-48 (VAAVLLIFAALFYFAQDIYAL), 56-76 (YLPEGATMIATGVASPFLAPF), 80-100 (LMISLFLAMPVVLHQVWGFIA), 121-141 (LFYAGMAFAYFVVFPIMFGFF), 165-185 (LFFAFGVAFEVPVATFLLIWV), 195-212 (NSRPYVIVGCFVVGMVLT), and 216-236 (VFSQTLLAVPMWLLFEIGVFF).

The protein belongs to the TatC family. In terms of assembly, the Tat system comprises two distinct complexes: a TatABC complex, containing multiple copies of TatA, TatB and TatC subunits, and a separate TatA complex, containing only TatA subunits. Substrates initially bind to the TatABC complex, which probably triggers association of the separate TatA complex to form the active translocon.

Its subcellular location is the cell membrane. Part of the twin-arginine translocation (Tat) system that transports large folded proteins containing a characteristic twin-arginine motif in their signal peptide across membranes. Together with TatB, TatC is part of a receptor directly interacting with Tat signal peptides. This chain is Sec-independent protein translocase protein TatC, found in Azotobacter chroococcum mcd 1.